A 492-amino-acid polypeptide reads, in one-letter code: Homoserine O-acetyltransferase (492 aa).

The 306-residue stretch at Asn-47–Leu-352 folds into the AB hydrolase-1 domain. The Nucleophile role is filled by Ser-152. Substrate is bound at residue Arg-221. Catalysis depends on residues Asp-315 and His-348. Asp-349 provides a ligand contact to substrate. CBS domains lie at Met-375 to Ile-431 and Met-440 to Ile-492.

This sequence belongs to the AB hydrolase superfamily. MetX family. As to quaternary structure, homodimer.

It is found in the cytoplasm. It catalyses the reaction L-homoserine + acetyl-CoA = O-acetyl-L-homoserine + CoA. Its pathway is amino-acid biosynthesis; L-methionine biosynthesis via de novo pathway; O-acetyl-L-homoserine from L-homoserine: step 1/1. In terms of biological role, transfers an acetyl group from acetyl-CoA to L-homoserine, forming acetyl-L-homoserine. The chain is Homoserine O-acetyltransferase from Methanococcus vannielii (strain ATCC 35089 / DSM 1224 / JCM 13029 / OCM 148 / SB).